The sequence spans 688 residues: PTS system glucoside-specific EIICBA component (688 aa).

A PTS EIIC type-1 domain is found at 3 to 427 (KKLFGQLQRI…FKLKTPGRED (425 aa)). The next 10 membrane-spanning stretches (helical) occupy residues 12-32 (IGKALMLPVAILPAAGILLAF), 81-101 (LGLAGGDGVAALAALVGYLIM), 137-157 (LVLGIPTLQTGVFGGIIMGAL), 182-202 (FVPIVTSVVAIATGVVLSFAW), 223-243 (LTTFIFGIIERSLIPFGLHHI), 284-304 (AFTTGKYPFMMFGLPAAAFAI), 315-335 (IVGGLMLSAGLTAFLTGITEP), 340-360 (FLFVAPVLYGIHVLLAGTSFL), 364-384 (LLGVKIGMTFSGGFIDYILYG), and 395-415 (LVIPVGIVYAIVYYFLFDFAI). The 82-residue stretch at 438-519 (AKLPFDVLDA…AKIMSGEITK (82 aa)) folds into the PTS EIIB type-1 domain. The Phosphocysteine intermediate; for EIIB activity role is filled by C460. Residues 560–664 (DQVFAGKMMG…SIVTPMIITN (105 aa)) enclose the PTS EIIA type-1 domain. Residue H612 is the Tele-phosphohistidine intermediate; for EIIA activity of the active site.

The protein localises to the cell membrane. In terms of biological role, the phosphoenolpyruvate-dependent sugar phosphotransferase system (sugar PTS), a major carbohydrate active -transport system, catalyzes the phosphorylation of incoming sugar substrates concomitantly with their translocation across the cell membrane. This system is involved in alpha- and beta-glucoside transport. The polypeptide is PTS system glucoside-specific EIICBA component (glcB) (Staphylococcus aureus (strain MRSA252)).